The chain runs to 236 residues: Biosynthetic peptidoglycan transglycosylase (236 aa).

A helical transmembrane segment spans residues 12-31 (ALLWFAAGSVLVVLVLRWVP).

The protein belongs to the glycosyltransferase 51 family.

It localises to the cell inner membrane. It carries out the reaction [GlcNAc-(1-&gt;4)-Mur2Ac(oyl-L-Ala-gamma-D-Glu-L-Lys-D-Ala-D-Ala)](n)-di-trans,octa-cis-undecaprenyl diphosphate + beta-D-GlcNAc-(1-&gt;4)-Mur2Ac(oyl-L-Ala-gamma-D-Glu-L-Lys-D-Ala-D-Ala)-di-trans,octa-cis-undecaprenyl diphosphate = [GlcNAc-(1-&gt;4)-Mur2Ac(oyl-L-Ala-gamma-D-Glu-L-Lys-D-Ala-D-Ala)](n+1)-di-trans,octa-cis-undecaprenyl diphosphate + di-trans,octa-cis-undecaprenyl diphosphate + H(+). It functions in the pathway cell wall biogenesis; peptidoglycan biosynthesis. Functionally, peptidoglycan polymerase that catalyzes glycan chain elongation from lipid-linked precursors. This Pseudomonas syringae pv. syringae (strain B728a) protein is Biosynthetic peptidoglycan transglycosylase.